A 262-amino-acid chain; its full sequence is Transcription factor Spi-B (262 aa).

The segment at 1–31 (MLALEAAQLDGPHFSCLYPDGVFYDLDSCKH) is TAD1 (Acidic). Positions 41 to 61 (PDSLWDWTVAPPVPATPYEAF) are TAD2. The tract at residues 140–163 (ALEVSDSESDEALVAGPEGKGSEA) is disordered. Positions 169 to 252 (LRLYQFLLGL…VKRKLTYQFD (84 aa)) form a DNA-binding region, ETS.

The protein belongs to the ETS family. In terms of assembly, can form homotypic interactions. Interacts with IRF4/Pip. Interacts with JUN. Interacts with TBP. May also interact with CREBBP and EP300. Interacts with NONO/p54(nrb). Expressed in plasmacytoid dendritic cells (pDCs) and B-cells, not expressed in T-cells or granulocytes. May also be enriched in stem cell populations of the liver.

The protein resides in the nucleus. It localises to the cytoplasm. Its function is as follows. Sequence specific transcriptional activator which binds to the PU-box, a purine-rich DNA sequence (5'-GAGGAA-3') that can act as a lymphoid-specific enhancer. Promotes development of plasmacytoid dendritic cells (pDCs), also known as type 2 DC precursors (pre-DC2) or natural interferon (IFN)-producing cells. These cells have the capacity to produce large amounts of interferon and block viral replication. May be required for B-cell receptor (BCR) signaling, which is necessary for normal B-cell development and antigenic stimulation. The sequence is that of Transcription factor Spi-B (SPIB) from Homo sapiens (Human).